Consider the following 241-residue polypeptide: Probable 2-phosphosulfolactate phosphatase (241 aa).

This sequence belongs to the ComB family. Mg(2+) is required as a cofactor.

The catalysed reaction is (2R)-O-phospho-3-sulfolactate + H2O = (2R)-3-sulfolactate + phosphate. This Gloeothece citriformis (strain PCC 7424) (Cyanothece sp. (strain PCC 7424)) protein is Probable 2-phosphosulfolactate phosphatase.